Here is a 211-residue protein sequence, read N- to C-terminus: Transcriptional regulatory protein RcsA (211 aa).

The region spanning 135-200 (LDVHPLTLSQ…VIYHVVRLTD (66 aa)) is the HTH luxR-type domain. Positions 159–178 (TIQISDKMQIKAKTVSSHKG) form a DNA-binding region, H-T-H motif.

It belongs to the RcsA family.

In terms of biological role, component of the Rcs signaling system, which controls transcription of numerous genes. Binds to DNA to regulate expression of genes. The polypeptide is Transcriptional regulatory protein RcsA (Pantoea stewartii subsp. stewartii (Erwinia stewartii)).